Reading from the N-terminus, the 77-residue chain is Teretoxin Tan15.2 (77 aa).

The first 21 residues, 1-21 (MTRLTVVFLAILVLLPLATSN), serve as a signal peptide directing secretion. Positions 22–40 (SGADEAPASLSDLLHRTKR) are excised as a propeptide.

Post-translationally, contains 4 disulfide bonds. Expressed by the venom duct.

The protein localises to the secreted. In Terebra anilis (Auger snail), this protein is Teretoxin Tan15.2.